Here is a 189-residue protein sequence, read N- to C-terminus: Insecticyanin-A (189 aa).

Cystine bridges form between Cys9-Cys119 and Cys43-Cys175.

It belongs to the calycin superfamily. Lipocalin family. Homotetramer. Synthesized only in the caterpillars, apparently by the epidermis and secreted into the hemolymph. The protein is passed over from the larval hemolymph to that of pupae and adults and is sequestered in the eggs.

It localises to the secreted. This protein binds a chromophore: biliverdin IX, isomer gamma. Mixed with lipoprotein-bound carotenes, this blue protein provides hornworms with their green cryptic coloration which serves a camouflage. The sequence is that of Insecticyanin-A (INSA) from Manduca sexta (Tobacco hawkmoth).